The chain runs to 202 residues: Holliday junction branch migration complex subunit RuvA (202 aa).

Residues 1–63 (MIEYLKGAIV…EDAHLLYGFS (63 aa)) are domain I. The interval 64–142 (TKEERTLFGQ…LETSSDEILS (79 aa)) is domain II. The segment at 143–153 (ARTAVGDAALN) is flexible linker. A domain III region spans residues 153–202 (NTIASGEEAISALKMLGFADPAIRKAVKSILSEDSSLAVEDIIKRALRML).

It belongs to the RuvA family. In terms of assembly, homotetramer. Forms an RuvA(8)-RuvB(12)-Holliday junction (HJ) complex. HJ DNA is sandwiched between 2 RuvA tetramers; dsDNA enters through RuvA and exits via RuvB. An RuvB hexamer assembles on each DNA strand where it exits the tetramer. Each RuvB hexamer is contacted by two RuvA subunits (via domain III) on 2 adjacent RuvB subunits; this complex drives branch migration. In the full resolvosome a probable DNA-RuvA(4)-RuvB(12)-RuvC(2) complex forms which resolves the HJ.

The protein localises to the cytoplasm. The RuvA-RuvB-RuvC complex processes Holliday junction (HJ) DNA during genetic recombination and DNA repair, while the RuvA-RuvB complex plays an important role in the rescue of blocked DNA replication forks via replication fork reversal (RFR). RuvA specifically binds to HJ cruciform DNA, conferring on it an open structure. The RuvB hexamer acts as an ATP-dependent pump, pulling dsDNA into and through the RuvAB complex. HJ branch migration allows RuvC to scan DNA until it finds its consensus sequence, where it cleaves and resolves the cruciform DNA. The sequence is that of Holliday junction branch migration complex subunit RuvA from Porphyromonas gingivalis (strain ATCC BAA-308 / W83).